We begin with the raw amino-acid sequence, 166 residues long: Phospholipase A2 inhibitor clone 10 (166 aa).

The first 19 residues, 1–19, serve as a signal peptide directing secretion; the sequence is MRLILLSSLLLLGIFLANG. Positions 46 to 161 constitute a C-type lectin domain; the sequence is LKYSFLTVHR…CDDNLLVVCE (116 aa). Cystine bridges form between Cys-83-Cys-160 and Cys-138-Cys-152. N-linked (GlcNAc...) asparagine glycosylation occurs at Asn-122.

Belongs to the alpha-type phospholipase A2 inhibitor family. As to quaternary structure, homotrimer; non-covalently linked. Expressed by the liver.

The protein resides in the secreted. In terms of biological role, this phospholipase A2 inhibitor binds directly phospholipase A2 in the presence or absence of calcium. This is Phospholipase A2 inhibitor clone 10 from Bothrops moojeni (Lance-headed viper).